The following is a 487-amino-acid chain: Variant surface glycoprotein WRATAT B (487 aa).

Positions 1–19 are cleaved as a signal peptide; sequence MWIILALLTLAGSRVAHGA. N-linked (GlcNAc...) asparagine glycosylation is found at Asn-71, Asn-84, Asn-418, and Asn-465. A disordered region spans residues 443 to 468; it reads KPKAGTEAATTGPGERDAGATANTTG. A lipid anchor (GPI-anchor amidated serine) is attached at Ser-470. The propeptide at 471 to 487 is removed in mature form; that stretch reads NSFVIKTSPLLFAFLLF.

It localises to the cell membrane. Its function is as follows. VSG forms a coat on the surface of the parasite. The trypanosome evades the immune response of the host by expressing a series of antigenically distinct VSGs from an estimated 1000 VSG genes. The sequence is that of Variant surface glycoprotein WRATAT B from Trypanosoma brucei rhodesiense.